The chain runs to 287 residues: uncharacterized protein (287 aa).

7 consecutive transmembrane segments (helical) span residues L27–Q47, L66–F86, W97–L117, I135–L155, I171–F191, L205–V225, and S254–L274.

The protein localises to the cell membrane. This is an uncharacterized protein from Mycoplasma pneumoniae (strain ATCC 29342 / M129 / Subtype 1) (Mycoplasmoides pneumoniae).